We begin with the raw amino-acid sequence, 447 residues long: tRNA modification GTPase MnmE (447 aa).

3 residues coordinate (6S)-5-formyl-5,6,7,8-tetrahydrofolate: R24, E81, and K120. In terms of domain architecture, TrmE-type G spans 216–371 (GLNVVIAGKP…LRKELSDIAG (156 aa)). N226 provides a ligand contact to K(+). Residues 226–231 (NAGKSS), 245–251 (TDIAGTT), and 270–273 (DTAG) contribute to the GTP site. Residue S230 participates in Mg(2+) binding. K(+)-binding residues include T245, I247, and T250. T251 serves as a coordination point for Mg(2+). K447 is a binding site for (6S)-5-formyl-5,6,7,8-tetrahydrofolate.

The protein belongs to the TRAFAC class TrmE-Era-EngA-EngB-Septin-like GTPase superfamily. TrmE GTPase family. As to quaternary structure, homodimer. Heterotetramer of two MnmE and two MnmG subunits. K(+) is required as a cofactor.

It localises to the cytoplasm. Its function is as follows. Exhibits a very high intrinsic GTPase hydrolysis rate. Involved in the addition of a carboxymethylaminomethyl (cmnm) group at the wobble position (U34) of certain tRNAs, forming tRNA-cmnm(5)s(2)U34. The protein is tRNA modification GTPase MnmE of Ruthia magnifica subsp. Calyptogena magnifica.